Consider the following 550-residue polypeptide: Phospholipase B-like 1 (550 aa).

Positions 1-39 (MCHRSHGRSLRPPSPLLLLLPLLLQSPWAAGAAEKHNSA) are cleaved as a signal peptide. Residue N72 is glycosylated (N-linked (GlcNAc...) (high mannose) asparagine; alternate). N72 carries N-linked (GlcNAc...) (hybrid) asparagine; alternate glycosylation. Residues 210 to 228 (LSPTKSSSLKKFKIWEMGH) constitute a propeptide, removed in mature form. N-linked (GlcNAc...) (high mannose) asparagine; alternate glycans are attached at residues N309 and N412. N309 and N412 each carry an N-linked (GlcNAc...) (hybrid) asparagine; alternate glycan. 2 disulfide bridges follow: C471/C476 and C475/C490. N527 carries N-linked (GlcNAc...) (high mannose) asparagine; alternate glycosylation. A glycan (N-linked (GlcNAc...) (hybrid) asparagine; alternate) is linked at N527.

It belongs to the phospholipase B-like family. As to quaternary structure, may form a homodimer, each monomer is composed of a chain A and a chain B. In terms of processing, the maturation cleavages that produces chains A and B are required to open the putative substrate binding pocket. Both chains A and B remain associated in the mature protein.

It localises to the lysosome. Its function is as follows. Exhibits weak phospholipase activity, acting on various phospholipids, including phosphatidylcholine, phosphatidylinositol, phosphatidylethanolamine and lysophospholipids. However, in view of the small size of the putative binding pocket, it has been proposed that it may act rather as an amidase or a peptidase. This is Phospholipase B-like 1 (Plbd1) from Rattus norvegicus (Rat).